Here is a 310-residue protein sequence, read N- to C-terminus: Malate dehydrogenase (310 aa).

Residues glycine 7–glycine 12 and aspartate 32 contribute to the NAD(+) site. The substrate site is built by arginine 81 and arginine 87. NAD(+) contacts are provided by residues asparagine 94 and valine 117–asparagine 119. Substrate-binding residues include asparagine 119 and arginine 150. Histidine 174 acts as the Proton acceptor in catalysis.

This sequence belongs to the LDH/MDH superfamily. MDH type 3 family.

The catalysed reaction is (S)-malate + NAD(+) = oxaloacetate + NADH + H(+). Catalyzes the reversible oxidation of malate to oxaloacetate. The sequence is that of Malate dehydrogenase from Chlorobium phaeobacteroides (strain BS1).